We begin with the raw amino-acid sequence, 1285 residues long: MALARPGTPDPQALASVLLLLLWAPALSLLAGTVPSEPPSACASDPCAPGTECQATESGGYTCGPMEPRGCATQPCHHGALCVPQGPDPTGFRCYCVPGFQGPRCELDIDECASRPCHHGATCRNLADRYECHCPLGYAGVTCEMEVDECASAPCLHGGSCLDGVGSFRCVCAPGYGGTRCQLDLDECQSQPCAHGGTCHDLVNGFRCDCAGTGYEGTHCEREVLECASAPCEHNASCLEGLGSFRCLCWPGYSGELCEVDEDECASSPCQHGGRCLQRSDPALYGGVQAAFPGAFSFRHAAGFLCHCPPGFEGADCGVEVDECASRPCLNGGHCQDLPNGFQCHCPDGYAGPTCEEDVDECLSDPCLHGGTCSDTVAGYICRCPETWGGRDCSVQLTGCQGHTCPLAATCIPIFESGVHSYVCHCPPGTHGPFCGQNTTFSVMAGSPIQASVPAGGPLGLALRFRTTLPAGTLATRNDTKESLELALVAATLQATLWSYSTTVLVLRLPDLALNDGHWHQVEVVLHLATLELRLWHEGCPARLCVASGPVALASTASATPLPAGISSAQLGDATFAGCLQDVRVDGHLLLPEDLGENVLLGCERREQCRPLPCVHGGSCVDLWTHFRCDCARPHRGPTCADEIPAATFGLGGAPSSASFLLQELPGPNLTVSFLLRTRESAGLLLQFANDSAAGLTVFLSEGRIRAEVPGSPAVVLPGRWDDGLRHLVMLSFGPDQLQDLGQHVHVGGRLLAADSQPWGGPFRGCLQDLRLDGCHLPFFPLPLDNSSQPSELGGRQSWNLTAGCVSEDMCSPDPCFNGGTCLVTWNDFHCTCPANFTGPTCAQQLWCPGQPCLPPATCEEVPDGFVCVAEATFREGPPAAFSGHNASSGRLLGGLSLAFRTRDSEAWLLRAAAGALEGVWLAVRNGSLAGGVRGGHGLPGAVLPIPGPRVADGAWHRVRLAMERPAATTSRWLLWLDGAATPVALRGLASDLGFLQGPGAVRILLAENFTGCLGRVALGGLPLPLARPRPGAAPGAREHFASWPGTPAPILGCRGAPVCAPSPCLHDGACRDLFDAFACACGPGWEGPRCEAHVDPCHSAPCARGRCHTHPDGRFECRCPPGFGGPRCRLPVPSKECSLNVTCLDGSPCEGGSPAANCSCLEGLAGQRCQVPTLPCEANPCLNGGTCRAAGGVSECICNARFSGQFCEVAKGLPLPLPFPLLEVAVPAACACLLLLLLGLLSGILAARKRRQSEGTYSPSQQEVAGARLEMDSVLKVPPEERLI.

The signal sequence occupies residues 1 to 28 (MALARPGTPDPQALASVLLLLLWAPALS). Residues 1-350 (MALARPGTPD…GFQCHCPDGY (350 aa)) form a required for maximum inhibition of APP amyloid-beta peptide secretion region. The EGF-like 1 domain maps to 67–106 (EPRGCATQPCHHGALCVPQGPDPTGFRCYCVPGFQGPRCE). Disulfide bonds link Cys-71-Cys-82, Cys-76-Cys-94, Cys-96-Cys-105, Cys-112-Cys-123, Cys-117-Cys-132, Cys-134-Cys-143, Cys-150-Cys-161, Cys-155-Cys-170, Cys-172-Cys-181, Cys-188-Cys-199, Cys-193-Cys-208, Cys-210-Cys-220, Cys-227-Cys-238, Cys-232-Cys-247, Cys-249-Cys-258, Cys-265-Cys-276, Cys-270-Cys-306, Cys-308-Cys-317, Cys-324-Cys-335, Cys-329-Cys-344, Cys-346-Cys-355, Cys-362-Cys-373, Cys-367-Cys-382, Cys-384-Cys-393, Cys-400-Cys-411, Cys-405-Cys-424, and Cys-426-Cys-435. Residues 108 to 144 (DIDECASRPCHHGATCRNLADRYECHCPLGYAGVTCE) form the EGF-like 2; calcium-binding domain. An EGF-like 3; calcium-binding domain is found at 146-182 (EVDECASAPCLHGGSCLDGVGSFRCVCAPGYGGTRCQ). The EGF-like 4; calcium-binding domain occupies 184 to 221 (DLDECQSQPCAHGGTCHDLVNGFRCDCAGTGYEGTHCE). 2 EGF-like domains span residues 223-259 (EVLE…ELCE) and 261-318 (DEDE…ADCG). N-linked (GlcNAc...) asparagine glycosylation occurs at Asn-235. Ser-267 carries an O-linked (Glc...) serine glycan. Residues 320 to 356 (EVDECASRPCLNGGHCQDLPNGFQCHCPDGYAGPTCE) form the EGF-like 7; calcium-binding domain. The region spanning 358-394 (DVDECLSDPCLHGGTCSDTVAGYICRCPETWGGRDCS) is the EGF-like 8; calcium-binding domain. The region spanning 396-436 (QLTGCQGHTCPLAATCIPIFESGVHSYVCHCPPGTHGPFCG) is the EGF-like 9 domain. The region spanning 431-603 (HGPFCGQNTT…DLGENVLLGC (173 aa)) is the Laminin G-like 1 domain. 2 N-linked (GlcNAc...) asparagine glycosylation sites follow: Asn-438 and Asn-478. 4 disulfides stabilise this stretch: Cys-579–Cys-603, Cys-609–Cys-620, Cys-614–Cys-629, and Cys-631–Cys-640. An EGF-like 10 domain is found at 605 to 641 (RREQCRPLPCVHGGSCVDLWTHFRCDCARPHRGPTCA). Residues 647 to 805 (ATFGLGGAPS…RQSWNLTAGC (159 aa)) form the Laminin G-like 2 domain. 4 N-linked (GlcNAc...) asparagine glycosylation sites follow: Asn-669, Asn-690, Asn-786, and Asn-800. 4 disulfide bridges follow: Cys-766/Cys-805, Cys-811/Cys-822, Cys-816/Cys-831, and Cys-833/Cys-842. One can recognise an EGF-like 11 domain in the interval 807–843 (SEDMCSPDPCFNGGTCLVTWNDFHCTCPANFTGPTCA). N-linked (GlcNAc...) asparagine glycosylation is found at Asn-836, Asn-886, Asn-926, and Asn-1009. Positions 871 to 1054 (EATFREGPPA…PGTPAPILGC (184 aa)) constitute a Laminin G-like 3 domain. 13 disulfides stabilise this stretch: Cys-1013–Cys-1054, Cys-1060–Cys-1071, Cys-1065–Cys-1080, Cys-1082–Cys-1091, Cys-1098–Cys-1108, Cys-1103–Cys-1118, Cys-1120–Cys-1129, Cys-1138–Cys-1150, Cys-1144–Cys-1159, Cys-1161–Cys-1170, Cys-1177–Cys-1188, Cys-1182–Cys-1197, and Cys-1199–Cys-1208. EGF-like domains follow at residues 1056–1092 (GAPV…PRCE), 1094–1130 (HVDP…PRCR), 1134–1171 (PSKE…QRCQ), and 1173–1209 (PTLP…QFCE). Asn-1141 and Asn-1158 each carry an N-linked (GlcNAc...) asparagine glycan. The helical transmembrane segment at 1225–1245 (VAVPAACACLLLLLLGLLSGI) threads the bilayer. The interaction with EPB41L5 stretch occupies residues 1249–1285 (RKRRQSEGTYSPSQQEVAGARLEMDSVLKVPPEERLI).

It belongs to the Crumbs protein family. In terms of assembly, associates with the gamma-secretase complex via interaction (via the transmembrane domain) with PSEN1/PS1. Interacts (via intracellular domain) with EPB41L5. Interacts with PALS1. O-glucosylated by POGLUT1 at Ser-267; consists of an O-glucose trisaccharide, in which the O-glucose is elongated by the addition of two xylose residues. O-glucosylation is required for localization at the plasma membrane. Post-translationally, N-glycosylated. Expressed in glomeruli, podocytes of the glomerular capillary loops, and parietal glomerular epithelial cells in the kidney (at protein level). Expressed in retina, fetal eye and brain. Also expressed in kidney, RPE/choroid, and at low levels in lung, placenta, and heart.

It localises to the apical cell membrane. Its subcellular location is the cytoplasm. It is found in the cell junction. The protein localises to the secreted. Its function is as follows. Apical polarity protein that plays a central role during the epithelial-to-mesenchymal transition (EMT) at gastrulation, when newly specified mesodermal cells move inside the embryo. Acts by promoting cell ingression, the process by which cells leave the epithelial epiblast and move inside the embryo to form a new tissue layer. The anisotropic distribution of CRB2 and MYH10/myosin-IIB at cell edges define which cells will ingress: cells with high apical CRB2 are probably extruded from the epiblast by neighboring cells with high levels of apical MYH10/myosin-IIB. Plays a role in the maintenance of retinal neuroepithelium organization, structural integrity, adhesion, photoreceptor polarity and retinal photoreceptor layer thickness. May play a role in determining the length of cone photoreceptor outer segments and proliferation of late-born progenitor cells. Also required for maintenance of the apical polarity complex during development of the cortex. Inhibits gamma-secretase-dependent cleavage of APP and secretion of amyloid-beta peptide 40 and amyloid-beta peptide 42, and thereby inhibits gamma-secretase-dependent Notch transcription. In Homo sapiens (Human), this protein is Protein crumbs homolog 2.